A 374-amino-acid chain; its full sequence is GDSL esterase/lipase At3g50400 (374 aa).

An N-terminal signal peptide occupies residues 1-26 (MKKSIFFVPVLVLFFFGSRFSRVASA). Serine 41 (nucleophile) is an active-site residue. N-linked (GlcNAc...) asparagine glycans are attached at residues asparagine 104 and asparagine 125. Active-site residues include aspartate 339 and histidine 342.

This sequence belongs to the 'GDSL' lipolytic enzyme family.

The protein localises to the secreted. The protein is GDSL esterase/lipase At3g50400 of Arabidopsis thaliana (Mouse-ear cress).